Here is an 88-residue protein sequence, read N- to C-terminus: Apolipoprotein C-I (88 aa).

A signal peptide spans 1–26; sequence MRLFLSLPVLVVVLAMVLEGPAPTQA.

The protein belongs to the apolipoprotein C1 family.

The protein resides in the secreted. In terms of biological role, inhibitor of lipoprotein binding to the low density lipoprotein (LDL) receptor, LDL receptor-related protein, and very low density lipoprotein (VLDL) receptor. Associates with high density lipoproteins (HDL) and the triacylglycerol-rich lipoproteins in the plasma and makes up about 10% of the protein of the VLDL and 2% of that of HDL. Appears to interfere directly with fatty acid uptake and is also the major plasma inhibitor of cholesteryl ester transfer protein (CETP). Binds free fatty acids and reduces their intracellular esterification. Modulates the interaction of APOE with beta-migrating VLDL and inhibits binding of beta-VLDL to the LDL receptor-related protein. The polypeptide is Apolipoprotein C-I (APOC1) (Mirounga angustirostris (Northern elephant seal)).